The chain runs to 166 residues: Transcriptional repressor NrdR (166 aa).

Residues 3–34 (CPFCGHDDTQVKDSRSTEDGVAIRRRRVCSAC) fold into a zinc finger. The ATP-cone domain maps to 49–139 (LSVTKADGRR…VYRDFREVEA (91 aa)). The interval 146–166 (DMKPIPGETDTPSPDDSQETP) is disordered.

The protein belongs to the NrdR family. The cofactor is Zn(2+).

In terms of biological role, negatively regulates transcription of bacterial ribonucleotide reductase nrd genes and operons by binding to NrdR-boxes. The sequence is that of Transcriptional repressor NrdR from Gluconobacter oxydans (strain 621H) (Gluconobacter suboxydans).